Consider the following 640-residue polypeptide: Threonine--tRNA ligase (640 aa).

The TGS domain maps to 1–61; that stretch reads MLVVTLPDGS…DKDSQLAIIT (61 aa). Positions 242–533 are catalytic; sequence DHRRLGKQLD…LIENHTGNMP (292 aa). Positions 333, 384, and 510 each coordinate Zn(2+).

This sequence belongs to the class-II aminoacyl-tRNA synthetase family. In terms of assembly, homodimer. The cofactor is Zn(2+).

The protein localises to the cytoplasm. The enzyme catalyses tRNA(Thr) + L-threonine + ATP = L-threonyl-tRNA(Thr) + AMP + diphosphate + H(+). Catalyzes the attachment of threonine to tRNA(Thr) in a two-step reaction: L-threonine is first activated by ATP to form Thr-AMP and then transferred to the acceptor end of tRNA(Thr). Also edits incorrectly charged L-seryl-tRNA(Thr). This chain is Threonine--tRNA ligase, found in Polynucleobacter necessarius subsp. necessarius (strain STIR1).